Consider the following 216-residue polypeptide: MASQLRVYVPEHPLIKHWLGVARDENTPPVLFKTAMGELGRWLTYEAARYWLPTVDTEVKTPLAIAKASLIDPQTPFVIVPILRAGLALVEGAQGLLPLAKIYHLGLVRNETTLEPSLYLNKLPERFAPGTHLLLLDPMLATGNTIMAALDLLMARDIDANLIRLVSVVAAPTALQKLSNAHPNLTIYTAMIDEQLNDRGYIVPGLGDAGDRCFGT.

Residues R84, R109, and 137–145 contribute to the 5-phospho-alpha-D-ribose 1-diphosphate site; that span reads DPMLATGNT. Uracil is bound by residues I202 and 207-209; that span reads GDA. Residue D208 coordinates 5-phospho-alpha-D-ribose 1-diphosphate.

The protein belongs to the UPRTase family. Requires Mg(2+) as cofactor.

It catalyses the reaction UMP + diphosphate = 5-phospho-alpha-D-ribose 1-diphosphate + uracil. Its pathway is pyrimidine metabolism; UMP biosynthesis via salvage pathway; UMP from uracil: step 1/1. Allosterically activated by GTP. Its function is as follows. Catalyzes the conversion of uracil and 5-phospho-alpha-D-ribose 1-diphosphate (PRPP) to UMP and diphosphate. This Synechocystis sp. (strain ATCC 27184 / PCC 6803 / Kazusa) protein is Uracil phosphoribosyltransferase.